The following is a 330-amino-acid chain: Ketol-acid reductoisomerase (NADP(+)) (330 aa).

The KARI N-terminal Rossmann domain occupies 1–181 (MNIYYEQDAD…GGTKAGVIET (181 aa)). Residues 24-27 (YGSQ), Lys-47, Ser-50, Ser-52, and 82-85 (DQTQ) each bind NADP(+). His-107 is an active-site residue. Gly-133 lines the NADP(+) pocket. The KARI C-terminal knotted domain maps to 182–327 (SFKDETETDL…AKLRGMMSWL (146 aa)). Residues Asp-190, Glu-194, Glu-226, and Glu-230 each contribute to the Mg(2+) site. Residue Ser-251 coordinates substrate.

Belongs to the ketol-acid reductoisomerase family. The cofactor is Mg(2+).

The catalysed reaction is (2R)-2,3-dihydroxy-3-methylbutanoate + NADP(+) = (2S)-2-acetolactate + NADPH + H(+). It catalyses the reaction (2R,3R)-2,3-dihydroxy-3-methylpentanoate + NADP(+) = (S)-2-ethyl-2-hydroxy-3-oxobutanoate + NADPH + H(+). It participates in amino-acid biosynthesis; L-isoleucine biosynthesis; L-isoleucine from 2-oxobutanoate: step 2/4. The protein operates within amino-acid biosynthesis; L-valine biosynthesis; L-valine from pyruvate: step 2/4. Involved in the biosynthesis of branched-chain amino acids (BCAA). Catalyzes an alkyl-migration followed by a ketol-acid reduction of (S)-2-acetolactate (S2AL) to yield (R)-2,3-dihydroxy-isovalerate. In the isomerase reaction, S2AL is rearranged via a Mg-dependent methyl migration to produce 3-hydroxy-3-methyl-2-ketobutyrate (HMKB). In the reductase reaction, this 2-ketoacid undergoes a metal-dependent reduction by NADPH to yield (R)-2,3-dihydroxy-isovalerate. This is Ketol-acid reductoisomerase (NADP(+)) from Chlorobaculum tepidum (strain ATCC 49652 / DSM 12025 / NBRC 103806 / TLS) (Chlorobium tepidum).